We begin with the raw amino-acid sequence, 249 residues long: MADS-box transcription factor 18 (249 aa).

One can recognise an MADS-box domain in the interval 1–61; sequence MGRGPVQLRR…GKLYEFSSHS (61 aa). The K-box domain maps to 88–179; the sequence is QENWGDEYGI…KLMETEKEKN (92 aa). Residues 184–249 form a disordered region; that stretch reads NTNREEQNGA…PPWMLRTSHT (66 aa). Over residues 210–236 the composition is skewed to polar residues; it reads PTTNNSQSQPRGSGESEAQPSPAQAGN.

In terms of tissue distribution, widely expressed. Transcripts accumulate to higher levels in organs that retain meristematic characteristics: in the apical meristem and in the meristematic leaf primordia formed on its flank; in the developing panicle at the early stage of rachis-branch primordia differentiation; in the procambium of the rachis branches and in all floral organ primordia.

Its subcellular location is the nucleus. Functionally, probable transcription factor. This is MADS-box transcription factor 18 (MADS18) from Oryza sativa subsp. indica (Rice).